The sequence spans 137 residues: Putative pre-16S rRNA nuclease (137 aa).

This sequence belongs to the YqgF nuclease family.

The protein resides in the cytoplasm. Could be a nuclease involved in processing of the 5'-end of pre-16S rRNA. In Mycoplasmopsis synoviae (strain 53) (Mycoplasma synoviae), this protein is Putative pre-16S rRNA nuclease.